A 181-amino-acid chain; its full sequence is SecB-like chaperone Rv1957 (181 aa).

Residue threonine 2 is modified to N-acetylthreonine.

Belongs to the SecB-like family. In terms of assembly, homotetramer, interacts with antitoxin HigA1.

In terms of biological role, chaperone component of an atypical, type II toxin-antitoxin chaperone (TAC) system. Prevents antitoxin HigA1 aggregation in vitro at a 1:3 chaperone:antitoxin ratio, probably also protects antitoxin HigA1 from protease. Required for neutralization of toxin HigB1 upon ectopic expression in Mycobacterium marinum or E.coli. When expressed in E.coli complements a secB deletion, restores export of OmpA and MBP and inhibits aggregation of proOmpC although it is less efficient than endogenous SecB. Complements the general chaperone function of E.coli SecB less well. In Mycobacterium tuberculosis (strain ATCC 25618 / H37Rv), this protein is SecB-like chaperone Rv1957 (secBL).